The following is a 512-amino-acid chain: Histidine ammonia-lyase (512 aa).

Residues 142–144 (ASG) constitute a cross-link (5-imidazolinone (Ala-Gly)). 2,3-didehydroalanine (Ser) is present on S143.

It belongs to the PAL/histidase family. In terms of processing, contains an active site 4-methylidene-imidazol-5-one (MIO), which is formed autocatalytically by cyclization and dehydration of residues Ala-Ser-Gly.

The protein localises to the cytoplasm. It carries out the reaction L-histidine = trans-urocanate + NH4(+). It participates in amino-acid degradation; L-histidine degradation into L-glutamate; N-formimidoyl-L-glutamate from L-histidine: step 1/3. In Bartonella quintana (strain Toulouse) (Rochalimaea quintana), this protein is Histidine ammonia-lyase.